The primary structure comprises 341 residues: Glycerol-3-phosphate dehydrogenase [NAD(P)+] (341 aa).

NADPH is bound by residues Ser15, Trp16, Arg36, and Lys110. Lys110, Gly139, and Ser141 together coordinate sn-glycerol 3-phosphate. Position 143 (Ala143) interacts with NADPH. Sn-glycerol 3-phosphate-binding residues include Lys194, Asp247, Ser257, Arg258, and Asn259. The active-site Proton acceptor is Lys194. Residue Arg258 participates in NADPH binding. Residues Val282 and Glu284 each coordinate NADPH.

Belongs to the NAD-dependent glycerol-3-phosphate dehydrogenase family.

The protein resides in the cytoplasm. It carries out the reaction sn-glycerol 3-phosphate + NAD(+) = dihydroxyacetone phosphate + NADH + H(+). The enzyme catalyses sn-glycerol 3-phosphate + NADP(+) = dihydroxyacetone phosphate + NADPH + H(+). It participates in membrane lipid metabolism; glycerophospholipid metabolism. Its function is as follows. Catalyzes the reduction of the glycolytic intermediate dihydroxyacetone phosphate (DHAP) to sn-glycerol 3-phosphate (G3P), the key precursor for phospholipid synthesis. The chain is Glycerol-3-phosphate dehydrogenase [NAD(P)+] from Xanthomonas oryzae pv. oryzae (strain MAFF 311018).